A 405-amino-acid chain; its full sequence is Bifunctional enzyme IspD/IspF (405 aa).

The 2-C-methyl-D-erythritol 4-phosphate cytidylyltransferase stretch occupies residues 1-246 (MLQMPSKQPI…KLSASLLPDV (246 aa)). The interval 247-405 (RTGNGYDVHQ…TATVVYRGRT (159 aa)) is 2-C-methyl-D-erythritol 2,4-cyclodiphosphate synthase. 2 residues coordinate a divalent metal cation: aspartate 253 and histidine 255. 4-CDP-2-C-methyl-D-erythritol 2-phosphate contacts are provided by residues 253 to 255 (DVH) and 279 to 280 (HS). Histidine 287 contacts a divalent metal cation. 4-CDP-2-C-methyl-D-erythritol 2-phosphate is bound by residues 301-303 (DIG), 377-380 (TTNE), phenylalanine 384, and arginine 387.

It in the N-terminal section; belongs to the IspD/TarI cytidylyltransferase family. IspD subfamily. This sequence in the C-terminal section; belongs to the IspF family. It depends on a divalent metal cation as a cofactor.

The catalysed reaction is 2-C-methyl-D-erythritol 4-phosphate + CTP + H(+) = 4-CDP-2-C-methyl-D-erythritol + diphosphate. The enzyme catalyses 4-CDP-2-C-methyl-D-erythritol 2-phosphate = 2-C-methyl-D-erythritol 2,4-cyclic diphosphate + CMP. It functions in the pathway isoprenoid biosynthesis; isopentenyl diphosphate biosynthesis via DXP pathway; isopentenyl diphosphate from 1-deoxy-D-xylulose 5-phosphate: step 2/6. Its pathway is isoprenoid biosynthesis; isopentenyl diphosphate biosynthesis via DXP pathway; isopentenyl diphosphate from 1-deoxy-D-xylulose 5-phosphate: step 4/6. Its function is as follows. Bifunctional enzyme that catalyzes the formation of 4-diphosphocytidyl-2-C-methyl-D-erythritol from CTP and 2-C-methyl-D-erythritol 4-phosphate (MEP) (IspD), and catalyzes the conversion of 4-diphosphocytidyl-2-C-methyl-D-erythritol 2-phosphate (CDP-ME2P) to 2-C-methyl-D-erythritol 2,4-cyclodiphosphate (ME-CPP) with a corresponding release of cytidine 5-monophosphate (CMP) (IspF). The sequence is that of Bifunctional enzyme IspD/IspF from Rhizobium etli (strain CIAT 652).